Here is a 1095-residue protein sequence, read N- to C-terminus: Putative disease resistance protein At4g11170 (1095 aa).

The TIR domain maps to W9–L173. The active site involves E84. Residues D168–I454 enclose the NB-ARC domain. LRR repeat units follow at residues C609–R631, N632–T654, K655–L677, H679–P701, S702–T722, and N723–W744.

It carries out the reaction NAD(+) + H2O = ADP-D-ribose + nicotinamide + H(+). The chain is Putative disease resistance protein At4g11170 from Arabidopsis thaliana (Mouse-ear cress).